The chain runs to 678 residues: Glycine--tRNA ligase beta subunit (678 aa).

It belongs to the class-II aminoacyl-tRNA synthetase family. Tetramer of two alpha and two beta subunits.

It localises to the cytoplasm. The enzyme catalyses tRNA(Gly) + glycine + ATP = glycyl-tRNA(Gly) + AMP + diphosphate. This is Glycine--tRNA ligase beta subunit from Sulfurihydrogenibium sp. (strain YO3AOP1).